The primary structure comprises 397 residues: MKFVDEAEIRVEAGDGGAGTVSFRREKYVPDGGPDGGDGGDGGSVYLVADENLNTLIDYRFERFHRAERGKNGQSADCTGRKGADLEVKVPVGTRATDTETGELLGDLTKHGQRLKAAQGGYHGLGNARFKTSTNRAPRQKTLGTPGDVRMLKLELMLLADVGLLGMPNAGKSTFIRSVSAAKPKVADYPFTTLVPNLGVVRLDAMSSFVIADIPGLIEGASEGAGLGIQFLKHLERCRVLLHLIDLMPADGSDPVDNAKAIVTELEKYSPKLAAKPRWLVFNKVDLMFEDEAQDLCKKIADAMNWEGEYYSISAVQGKNTKELCIKVMDFIESLPEDAIEESDDEEVGFKWDTYHKETVENYEDDDDFDDDDDDDFDGDDDDDFDGDDDFEVIYQK.

The region spanning 1–159 (MKFVDEAEIR…RMLKLELMLL (159 aa)) is the Obg domain. The interval 22 to 44 (SFRREKYVPDGGPDGGDGGDGGS) is disordered. Residues 33–43 (GPDGGDGGDGG) show a composition bias toward gly residues. The OBG-type G domain occupies 160–333 (ADVGLLGMPN…LCIKVMDFIE (174 aa)). GTP-binding positions include 166–173 (GMPNAGKS), 191–195 (FTTLV), 213–216 (DIPG), 283–286 (NKVD), and 314–316 (SAV). Ser173 and Thr193 together coordinate Mg(2+). A disordered region spans residues 359 to 389 (TVENYEDDDDFDDDDDDDFDGDDDDDFDGDD). The span at 361-389 (ENYEDDDDFDDDDDDDFDGDDDDDFDGDD) shows a compositional bias: acidic residues.

It belongs to the TRAFAC class OBG-HflX-like GTPase superfamily. OBG GTPase family. In terms of assembly, monomer. Requires Mg(2+) as cofactor.

It is found in the cytoplasm. Its function is as follows. An essential GTPase which binds GTP, GDP and possibly (p)ppGpp with moderate affinity, with high nucleotide exchange rates and a fairly low GTP hydrolysis rate. Plays a role in control of the cell cycle, stress response, ribosome biogenesis and in those bacteria that undergo differentiation, in morphogenesis control. This is GTPase Obg from Pseudoalteromonas atlantica (strain T6c / ATCC BAA-1087).